A 126-amino-acid chain; its full sequence is Large ribosomal subunit protein bL12 (126 aa).

It belongs to the bacterial ribosomal protein bL12 family. Homodimer. Part of the ribosomal stalk of the 50S ribosomal subunit. Forms a multimeric L10(L12)X complex, where L10 forms an elongated spine to which 2 to 4 L12 dimers bind in a sequential fashion. Binds GTP-bound translation factors.

In terms of biological role, forms part of the ribosomal stalk which helps the ribosome interact with GTP-bound translation factors. Is thus essential for accurate translation. The polypeptide is Large ribosomal subunit protein bL12 (Chlorobaculum parvum (strain DSM 263 / NCIMB 8327) (Chlorobium vibrioforme subsp. thiosulfatophilum)).